A 415-amino-acid chain; its full sequence is Multifunctional CCA protein (415 aa).

Positions 8 and 11 each coordinate ATP. Glycine 8 and arginine 11 together coordinate CTP. The Mg(2+) site is built by glutamate 21 and aspartate 23. ATP is bound by residues arginine 91, arginine 137, and arginine 140. Arginine 91, arginine 137, and arginine 140 together coordinate CTP. The region spanning 226–327 (TGIHTLMTVS…IKLFSAIDVW (102 aa)) is the HD domain.

This sequence belongs to the tRNA nucleotidyltransferase/poly(A) polymerase family. Bacterial CCA-adding enzyme type 1 subfamily. As to quaternary structure, monomer. Can also form homodimers and oligomers. The cofactor is Mg(2+). It depends on Ni(2+) as a cofactor.

It catalyses the reaction a tRNA precursor + 2 CTP + ATP = a tRNA with a 3' CCA end + 3 diphosphate. It carries out the reaction a tRNA with a 3' CCA end + 2 CTP + ATP = a tRNA with a 3' CCACCA end + 3 diphosphate. Catalyzes the addition and repair of the essential 3'-terminal CCA sequence in tRNAs without using a nucleic acid template. Adds these three nucleotides in the order of C, C, and A to the tRNA nucleotide-73, using CTP and ATP as substrates and producing inorganic pyrophosphate. tRNA 3'-terminal CCA addition is required both for tRNA processing and repair. Also involved in tRNA surveillance by mediating tandem CCA addition to generate a CCACCA at the 3' terminus of unstable tRNAs. While stable tRNAs receive only 3'-terminal CCA, unstable tRNAs are marked with CCACCA and rapidly degraded. In Sodalis glossinidius (strain morsitans), this protein is Multifunctional CCA protein.